Consider the following 272-residue polypeptide: 2-amino-3,7-dideoxy-D-threo-hept-6-ulosonate synthase (272 aa).

Asp33 acts as the Proton acceptor in catalysis. Residues 33–37 (DHGVS) and 153–155 (YPR) contribute to the 1-deoxy-D-threo-hexo-2,5-diulose 6-phosphate site. Catalysis depends on Tyr153, which acts as the Proton donor. The Schiff-base intermediate with substrate role is filled by Lys184. 1-deoxy-D-threo-hexo-2,5-diulose 6-phosphate contacts are provided by residues 209 to 210 (GG) and 237 to 238 (GR).

Belongs to the DeoC/FbaB aldolase family. ADHS subfamily. As to quaternary structure, homodecamer.

It carries out the reaction 1-deoxy-D-threo-hexo-2,5-diulose 6-phosphate + L-aspartate 4-semialdehyde = 2,3-dioxopropyl phosphate + 2-amino-2,3,7-trideoxy-D-lyxo-hept-6-ulosonate. Its function is as follows. Catalyzes a transaldol reaction between 6-deoxy-5-ketofructose 1-phosphate (DKFP) and L-aspartate semialdehyde (ASA) with an elimination of hydroxypyruvaldehyde phosphate to yield 2-amino-3,7-dideoxy-D-threo-hept-6-ulosonate (ADH). Plays a key role in an alternative pathway of the biosynthesis of 3-dehydroquinate (DHQ), which is involved in the canonical pathway for the biosynthesis of aromatic amino acids. This Methanococcus maripaludis (strain C5 / ATCC BAA-1333) protein is 2-amino-3,7-dideoxy-D-threo-hept-6-ulosonate synthase.